The sequence spans 1073 residues: Carbamoyl phosphate synthase large chain (1073 aa).

The interval 2-403 (PKRTDIKSIL…SLQKALRGLE (402 aa)) is carboxyphosphate synthetic domain. ATP is bound by residues R129, R169, G175, G176, E208, L210, E215, G241, I242, H243, Q285, and E299. Residues 133-328 (DVAMKKIGLE…IAKVAAKLAV (196 aa)) form the ATP-grasp 1 domain. Residues Q285, E299, and N301 each coordinate Mg(2+). Residues Q285, E299, and N301 each coordinate Mn(2+). An oligomerization domain region spans residues 404 to 553 (VGATGFDPKV…YSTYEEECEA (150 aa)). Positions 554-936 (NPSTDREKIM…AFAKAQLGSN (383 aa)) are carbamoyl phosphate synthetic domain. The ATP-grasp 2 domain maps to 679–870 (QHAVERLKLK…LAKVAARVMA (192 aa)). Residues R715, H754, L756, E761, G786, V787, H788, S789, Q829, and E841 each coordinate ATP. 3 residues coordinate Mg(2+): Q829, E841, and N843. Residues Q829, E841, and N843 each coordinate Mn(2+). The MGS-like domain occupies 937–1073 (STMKKHGRAL…SVQEMHAQIK (137 aa)). The segment at 937–1073 (STMKKHGRAL…SVQEMHAQIK (137 aa)) is allosteric domain.

This sequence belongs to the CarB family. Composed of two chains; the small (or glutamine) chain promotes the hydrolysis of glutamine to ammonia, which is used by the large (or ammonia) chain to synthesize carbamoyl phosphate. Tetramer of heterodimers (alpha,beta)4. Requires Mg(2+) as cofactor. The cofactor is Mn(2+).

The catalysed reaction is hydrogencarbonate + L-glutamine + 2 ATP + H2O = carbamoyl phosphate + L-glutamate + 2 ADP + phosphate + 2 H(+). The enzyme catalyses hydrogencarbonate + NH4(+) + 2 ATP = carbamoyl phosphate + 2 ADP + phosphate + 2 H(+). It functions in the pathway amino-acid biosynthesis; L-arginine biosynthesis; carbamoyl phosphate from bicarbonate: step 1/1. The protein operates within pyrimidine metabolism; UMP biosynthesis via de novo pathway; (S)-dihydroorotate from bicarbonate: step 1/3. In terms of biological role, large subunit of the glutamine-dependent carbamoyl phosphate synthetase (CPSase). CPSase catalyzes the formation of carbamoyl phosphate from the ammonia moiety of glutamine, carbonate, and phosphate donated by ATP, constituting the first step of 2 biosynthetic pathways, one leading to arginine and/or urea and the other to pyrimidine nucleotides. The large subunit (synthetase) binds the substrates ammonia (free or transferred from glutamine from the small subunit), hydrogencarbonate and ATP and carries out an ATP-coupled ligase reaction, activating hydrogencarbonate by forming carboxy phosphate which reacts with ammonia to form carbamoyl phosphate. The polypeptide is Carbamoyl phosphate synthase large chain (Escherichia coli (strain K12)).